Consider the following 355-residue polypeptide: 3-dehydroquinate synthase (355 aa).

NAD(+) is bound by residues 71–76 (EGEERK), 105–109 (GVVGD), 129–130 (TS), lysine 142, and lysine 151. Residues glutamate 184, histidine 246, and histidine 263 each contribute to the Zn(2+) site.

This sequence belongs to the sugar phosphate cyclases superfamily. Dehydroquinate synthase family. It depends on Co(2+) as a cofactor. Zn(2+) is required as a cofactor. Requires NAD(+) as cofactor.

The protein resides in the cytoplasm. The catalysed reaction is 7-phospho-2-dehydro-3-deoxy-D-arabino-heptonate = 3-dehydroquinate + phosphate. It participates in metabolic intermediate biosynthesis; chorismate biosynthesis; chorismate from D-erythrose 4-phosphate and phosphoenolpyruvate: step 2/7. Functionally, catalyzes the conversion of 3-deoxy-D-arabino-heptulosonate 7-phosphate (DAHP) to dehydroquinate (DHQ). This is 3-dehydroquinate synthase from Streptococcus pneumoniae (strain ATCC 700669 / Spain 23F-1).